A 187-amino-acid polypeptide reads, in one-letter code: ATP synthase subunit b 2 (187 aa).

Residues M1–D12 are compositionally biased toward basic and acidic residues. Positions M1 to P31 are disordered. A helical membrane pass occupies residues L40–L60.

Belongs to the ATPase B chain family. As to quaternary structure, F-type ATPases have 2 components, F(1) - the catalytic core - and F(0) - the membrane proton channel. F(1) has five subunits: alpha(3), beta(3), gamma(1), delta(1), epsilon(1). F(0) has three main subunits: a(1), b(2) and c(10-14). The alpha and beta chains form an alternating ring which encloses part of the gamma chain. F(1) is attached to F(0) by a central stalk formed by the gamma and epsilon chains, while a peripheral stalk is formed by the delta and b chains.

The protein resides in the cell inner membrane. In terms of biological role, f(1)F(0) ATP synthase produces ATP from ADP in the presence of a proton or sodium gradient. F-type ATPases consist of two structural domains, F(1) containing the extramembraneous catalytic core and F(0) containing the membrane proton channel, linked together by a central stalk and a peripheral stalk. During catalysis, ATP synthesis in the catalytic domain of F(1) is coupled via a rotary mechanism of the central stalk subunits to proton translocation. Component of the F(0) channel, it forms part of the peripheral stalk, linking F(1) to F(0). The b'-subunit is a diverged and duplicated form of b found in plants and photosynthetic bacteria. In Beijerinckia indica subsp. indica (strain ATCC 9039 / DSM 1715 / NCIMB 8712), this protein is ATP synthase subunit b 2 (atpF2).